The following is a 200-amino-acid chain: dTTP/UTP pyrophosphatase (200 aa).

The Proton acceptor role is filled by aspartate 81.

This sequence belongs to the Maf family. YhdE subfamily. The cofactor is a divalent metal cation.

The protein localises to the cytoplasm. It catalyses the reaction dTTP + H2O = dTMP + diphosphate + H(+). The catalysed reaction is UTP + H2O = UMP + diphosphate + H(+). Functionally, nucleoside triphosphate pyrophosphatase that hydrolyzes dTTP and UTP. May have a dual role in cell division arrest and in preventing the incorporation of modified nucleotides into cellular nucleic acids. The polypeptide is dTTP/UTP pyrophosphatase (Cupriavidus pinatubonensis (strain JMP 134 / LMG 1197) (Cupriavidus necator (strain JMP 134))).